The primary structure comprises 653 residues: Sodium-dependent phosphate transporter 2 (653 aa).

Topologically, residues 1–5 (MAIDG) are extracellular. A helical membrane pass occupies residues 6–26 (YLWMVILGFIIAFILAFSVGA). The Cytoplasmic segment spans residues 27–46 (NDVANSFGTAVGSGVVTLRQ). The helical transmembrane segment at 47 to 67 (ACILASIFETTGSVLLGAKVG) threads the bilayer. Topologically, residues 68–86 (ETIRKGIIDVNLYNETVET) are extracellular. A glycan (N-linked (GlcNAc...) asparagine) is linked at asparagine 81. A helical membrane pass occupies residues 87-107 (LMAGEVSAMVGSAVWQLIASF). Over 108–109 (LR) the chain is Cytoplasmic. Residues 110-130 (LPISGTHCIVGSTIGFSLVAI) traverse the membrane as a helical segment. Over 131–142 (GTQGVQWMELVK) the chain is Extracellular. Residues 143–163 (IVASWFISPLLSGFMSGVLFI) traverse the membrane as a helical segment. Residues 164–190 (LIRIFILKKEDPVPNGLRALPVFYAAT) lie on the Cytoplasmic side of the membrane. The chain crosses the membrane as a helical span at residues 191-211 (IAINVFSIMYTGAPVLGLVLP). Over 212–213 (IW) the chain is Extracellular. A helical transmembrane segment spans residues 214–234 (AIALISFGVALLFALFVWLFV). Residues 235 to 483 (CPWMRRKIAG…EEKEEKDTAE (249 aa)) lie on the Cytoplasmic side of the membrane. Phosphoserine occurs at positions 253, 256, 259, and 268. A disordered region spans residues 275–311 (PGAKANDDSTVPLTGSAGEPSGTSEGTSVGNHPRASY). Residues 295 to 304 (SGTSEGTSVG) are compositionally biased toward polar residues. Phosphoserine is present on residues serine 316 and serine 385. The tract at residues 459-478 (SELTDPDQPRDDPAEEEKEE) is disordered. A helical membrane pass occupies residues 484-504 (VHLLFHFLQVLTACFGSFAHG). Topologically, residues 505 to 531 (GNDVSNAIGPLVALWLIYEQGAVLQEA) are extracellular. A helical membrane pass occupies residues 532-552 (VTPVWLLFYGGVGICTGLWVW). The Cytoplasmic segment spans residues 553-572 (GRRVIQTMGKDLTPITPSSG). A helical membrane pass occupies residues 573-587 (FTIELASAFTVVIAS). At 588-594 (NVGLPVS) the chain is on the extracellular side. The chain crosses the membrane as a helical span at residues 595-610 (TTHCKVGSVVAVGWIR). The Cytoplasmic segment spans residues 611–622 (SRKAVDWRLFRN). Residues 623 to 643 (IFVAWFVTVPVAGLFSAAIMA) form a helical membrane-spanning segment. At 644–653 (LLMYGILPYV) the chain is on the extracellular side.

This sequence belongs to the inorganic phosphate transporter (PiT) (TC 2.A.20) family. Homodimer.

It is found in the cell membrane. It localises to the apical cell membrane. The catalysed reaction is 2 Na(+)(out) + phosphate(out) = 2 Na(+)(in) + phosphate(in). Sodium-phosphate symporter which preferentially transports the monovalent form of phosphate with a stoichiometry of two sodium ions per phosphate ion. Plays a critical role in the determination of bone quality and strength by providing phosphate for bone mineralization. Required to maintain normal cerebrospinal fluid phosphate levels. Mediates phosphate-induced calcification of vascular smooth muscle cells (VCMCs) and can functionally compensate for loss of SLC20A1 in VCMCs. Functionally, (Microbial infection) Functions as a retroviral receptor for feline leukemia virus subgroup B (FeLV-B). The protein is Sodium-dependent phosphate transporter 2 (SLC20A2) of Felis catus (Cat).